The primary structure comprises 457 residues: Bifunctional F420 biosynthesis protein FbiB (457 aa).

Residues 1–253 (MTSSDSHRSA…NGPDDLFWLG (253 aa)) form a coenzyme F420:L-glutamate ligase region. GTP contacts are provided by residues 29-32 (LPEF), Ser59, and Lys64. Asp118 serves as a coordination point for a divalent metal cation. Asn121 contacts GTP. Residues Asp159 and Thr160 each contribute to the a divalent metal cation site. Positions 254–457 (TTEALELGRQ…VRVADLLLRK (204 aa)) are dehydro-coenzyme F420-0 reductase. Residues 269–273 (RRSVR) and Ala297 contribute to the FMN site. Asp329 is a coenzyme F420-(gamma-Glu)n binding site. Residues Gly408 and Arg445 each coordinate FMN.

This sequence in the N-terminal section; belongs to the CofE family. It depends on Mg(2+) as a cofactor. Requires Mn(2+) as cofactor. K(+) serves as cofactor.

It carries out the reaction oxidized coenzyme F420-0 + GTP + L-glutamate = oxidized coenzyme F420-1 + GDP + phosphate + H(+). The enzyme catalyses oxidized coenzyme F420-1 + GTP + L-glutamate = oxidized coenzyme F420-2 + GDP + phosphate + H(+). It catalyses the reaction oxidized coenzyme F420-(gamma-L-Glu)(n) + GTP + L-glutamate = oxidized coenzyme F420-(gamma-L-Glu)(n+1) + GDP + phosphate + H(+). The catalysed reaction is oxidized coenzyme F420-0 + FMN + H(+) = dehydro coenzyme F420-0 + FMNH2. The protein operates within cofactor biosynthesis; coenzyme F420 biosynthesis. Its function is as follows. Bifunctional enzyme that catalyzes the GTP-dependent successive addition of multiple gamma-linked L-glutamates to the L-lactyl phosphodiester of 7,8-didemethyl-8-hydroxy-5-deazariboflavin (F420-0) to form polyglutamated F420 derivatives, and the FMNH2-dependent reduction of dehydro-F420-0 to form F420-0. The sequence is that of Bifunctional F420 biosynthesis protein FbiB from Mycobacterium leprae (strain TN).